The primary structure comprises 332 residues: DNA-directed RNA polymerase subunit alpha (332 aa).

Positions methionine 1–threonine 234 are alpha N-terminal domain (alpha-NTD). Residues valine 248–glycine 332 are alpha C-terminal domain (alpha-CTD).

It belongs to the RNA polymerase alpha chain family. In terms of assembly, homodimer. The RNAP catalytic core consists of 2 alpha, 1 beta, 1 beta' and 1 omega subunit. When a sigma factor is associated with the core the holoenzyme is formed, which can initiate transcription.

It carries out the reaction RNA(n) + a ribonucleoside 5'-triphosphate = RNA(n+1) + diphosphate. Its function is as follows. DNA-dependent RNA polymerase catalyzes the transcription of DNA into RNA using the four ribonucleoside triphosphates as substrates. In Xylella fastidiosa (strain M23), this protein is DNA-directed RNA polymerase subunit alpha.